A 906-amino-acid chain; its full sequence is Valine--tRNA ligase (906 aa).

Residues 43-53 carry the 'HIGH' region motif; sequence PNVTGSLHIGH. The 'KMSKS' region signature appears at 548–552; the sequence is KMSKS. ATP is bound at residue Lys551. Residues 842-905 adopt a coiled-coil conformation; it reads EKARLTKDIA…EAALSRLASV (64 aa).

Belongs to the class-I aminoacyl-tRNA synthetase family. ValS type 1 subfamily. As to quaternary structure, monomer.

It localises to the cytoplasm. The enzyme catalyses tRNA(Val) + L-valine + ATP = L-valyl-tRNA(Val) + AMP + diphosphate. Its function is as follows. Catalyzes the attachment of valine to tRNA(Val). As ValRS can inadvertently accommodate and process structurally similar amino acids such as threonine, to avoid such errors, it has a 'posttransfer' editing activity that hydrolyzes mischarged Thr-tRNA(Val) in a tRNA-dependent manner. The protein is Valine--tRNA ligase of Caulobacter vibrioides (strain ATCC 19089 / CIP 103742 / CB 15) (Caulobacter crescentus).